Reading from the N-terminus, the 811-residue chain is tRNA(Met) cytidine acetyltransferase TmcA (811 aa).

The ATP site is built by Gln-267 and Arg-439. Positions 473-662 (KKEVYLEEPD…GEFTAIVLKP (190 aa)) constitute an N-acetyltransferase domain. Acetyl-CoA is bound by residues 589-591 (IAT), Glu-629, and Arg-636.

This sequence belongs to the TmcA family.

Its subcellular location is the cytoplasm. It catalyses the reaction cytidine(34) in elongator tRNA(Met) + acetyl-CoA + ATP + H2O = N(4)-acetylcytidine(34) in elongator tRNA(Met) + ADP + phosphate + CoA + H(+). The catalysed reaction is a cytidine in RNA + acetyl-CoA + ATP + H2O = an N(4)-acetylcytidine in RNA + ADP + phosphate + CoA + H(+). The enzyme catalyses a cytidine in tRNA + acetyl-CoA + ATP + H2O = an N(4)-acetylcytidine in tRNA + ADP + phosphate + CoA + H(+). It carries out the reaction a cytidine in mRNA + acetyl-CoA + ATP + H2O = an N(4)-acetylcytidine in mRNA + ADP + phosphate + CoA + H(+). Functionally, catalyzes the formation of N(4)-acetylcytidine (ac(4)C) at the wobble position of tRNA(Met), by using acetyl-CoA as an acetyl donor and ATP (or GTP). Its function is as follows. Catalyzes the formation of 267 N(4)-acetylcytidine (ac(4)C) sites in RNA, almost always on the middle C of a CCG motif. Modifications are found in rRNA, ncRNA, mRNA and tRNA. More acetylation is observed at 95 than at 75 or 85 degrees Celsius. The sequence is that of tRNA(Met) cytidine acetyltransferase TmcA from Thermococcus sp. (strain AM4).